Consider the following 210-residue polypeptide: Thiamine-phosphate synthase (210 aa).

Residues 34–38 (QLRHK) and Asn-66 contribute to the 4-amino-2-methyl-5-(diphosphooxymethyl)pyrimidine site. Mg(2+) is bound by residues Asp-67 and Asp-86. Ser-105 contacts 4-amino-2-methyl-5-(diphosphooxymethyl)pyrimidine. 131–133 (TSS) is a binding site for 2-[(2R,5Z)-2-carboxy-4-methylthiazol-5(2H)-ylidene]ethyl phosphate. Position 134 (Lys-134) interacts with 4-amino-2-methyl-5-(diphosphooxymethyl)pyrimidine. A 2-[(2R,5Z)-2-carboxy-4-methylthiazol-5(2H)-ylidene]ethyl phosphate-binding site is contributed by Gly-162.

The protein belongs to the thiamine-phosphate synthase family. Requires Mg(2+) as cofactor.

It carries out the reaction 2-[(2R,5Z)-2-carboxy-4-methylthiazol-5(2H)-ylidene]ethyl phosphate + 4-amino-2-methyl-5-(diphosphooxymethyl)pyrimidine + 2 H(+) = thiamine phosphate + CO2 + diphosphate. It catalyses the reaction 2-(2-carboxy-4-methylthiazol-5-yl)ethyl phosphate + 4-amino-2-methyl-5-(diphosphooxymethyl)pyrimidine + 2 H(+) = thiamine phosphate + CO2 + diphosphate. The enzyme catalyses 4-methyl-5-(2-phosphooxyethyl)-thiazole + 4-amino-2-methyl-5-(diphosphooxymethyl)pyrimidine + H(+) = thiamine phosphate + diphosphate. Its pathway is cofactor biosynthesis; thiamine diphosphate biosynthesis; thiamine phosphate from 4-amino-2-methyl-5-diphosphomethylpyrimidine and 4-methyl-5-(2-phosphoethyl)-thiazole: step 1/1. Its function is as follows. Condenses 4-methyl-5-(beta-hydroxyethyl)thiazole monophosphate (THZ-P) and 2-methyl-4-amino-5-hydroxymethyl pyrimidine pyrophosphate (HMP-PP) to form thiamine monophosphate (TMP). This chain is Thiamine-phosphate synthase, found in Chlorobium limicola (strain DSM 245 / NBRC 103803 / 6330).